Consider the following 492-residue polypeptide: Asparagine--tRNA ligase, mitochondrial (492 aa).

It belongs to the class-II aminoacyl-tRNA synthetase family.

Its subcellular location is the mitochondrion matrix. The catalysed reaction is tRNA(Asn) + L-asparagine + ATP = L-asparaginyl-tRNA(Asn) + AMP + diphosphate + H(+). Catalyzes the attachment of asparagine to tRNA(Asn) in the mitochondrion. This Saccharomyces cerevisiae (strain ATCC 204508 / S288c) (Baker's yeast) protein is Asparagine--tRNA ligase, mitochondrial (SLM5).